Reading from the N-terminus, the 238-residue chain is Large ribosomal subunit protein uL2 (238 aa).

Residues 1–11 are compositionally biased toward polar residues; sequence MGKRLISQNRG. 2 disordered regions span residues 1-22 and 202-223; these read MGKR…APSH and FGGG…APPG.

It belongs to the universal ribosomal protein uL2 family. Part of the 50S ribosomal subunit. Forms a bridge to the 30S subunit in the 70S ribosome.

One of the primary rRNA binding proteins. Required for association of the 30S and 50S subunits to form the 70S ribosome, for tRNA binding and peptide bond formation. It has been suggested to have peptidyltransferase activity; this is somewhat controversial. Makes several contacts with the 16S rRNA in the 70S ribosome. The sequence is that of Large ribosomal subunit protein uL2 from Methanosarcina acetivorans (strain ATCC 35395 / DSM 2834 / JCM 12185 / C2A).